A 289-amino-acid polypeptide reads, in one-letter code: Ribosomal RNA small subunit methyltransferase A (289 aa).

S-adenosyl-L-methionine contacts are provided by His27, Leu29, Gly54, Glu76, Asp102, and Asn123.

This sequence belongs to the class I-like SAM-binding methyltransferase superfamily. rRNA adenine N(6)-methyltransferase family. RsmA subfamily.

It localises to the cytoplasm. It carries out the reaction adenosine(1518)/adenosine(1519) in 16S rRNA + 4 S-adenosyl-L-methionine = N(6)-dimethyladenosine(1518)/N(6)-dimethyladenosine(1519) in 16S rRNA + 4 S-adenosyl-L-homocysteine + 4 H(+). Specifically dimethylates two adjacent adenosines (A1518 and A1519) in the loop of a conserved hairpin near the 3'-end of 16S rRNA in the 30S particle. May play a critical role in biogenesis of 30S subunits. In Maricaulis maris (strain MCS10) (Caulobacter maris), this protein is Ribosomal RNA small subunit methyltransferase A.